Here is a 198-residue protein sequence, read N- to C-terminus: Glycerol-3-phosphate acyltransferase 2 (198 aa).

Transmembrane regions (helical) follow at residues 4–24 (TYLLFIVAYLLGSIPFALVVG), 71–91 (LPIIFALDIHPLWFGLAAVLG), 113–133 (LLCYSPVVFAILAVVFFSLLF), and 147–167 (VVAVIASIVSGDKIFIIAMCL).

The protein belongs to the PlsY family. As to quaternary structure, probably interacts with PlsX.

The protein localises to the cell membrane. The catalysed reaction is an acyl phosphate + sn-glycerol 3-phosphate = a 1-acyl-sn-glycero-3-phosphate + phosphate. It functions in the pathway lipid metabolism; phospholipid metabolism. Functionally, catalyzes the transfer of an acyl group from acyl-phosphate (acyl-PO(4)) to glycerol-3-phosphate (G3P) to form lysophosphatidic acid (LPA). This enzyme utilizes acyl-phosphate as fatty acyl donor, but not acyl-CoA or acyl-ACP. This Bacillus cereus (strain ATCC 10987 / NRS 248) protein is Glycerol-3-phosphate acyltransferase 2.